The following is a 437-amino-acid chain: MSPLSMQTDSVQGTAENKSLETNGTSNDQQLPWKVLGKSLGLPTIEQEQYWLNTAPYFNNLLIQCGYDVHQQYQYLAFYHRHVLPVLGPFIRSSAEANYISGFSAEGYPMELSVNYQASKATVRLGCEPVGEFAGTSQDPMNQFMTREVLGRLSRLDPTFDLRLFDYFDSQFSLTTSEANLAASKLIKQRRQSKVIAFDLKDGAIIPKAYFFLKGKSLASGIPVQDVAFNAIESIAPKQIESPLRVLRTFVTKLFSKPTVTSDVFILAVDCIVPEKSRIKLYVADSQLSLATLREFWTLGGSVTDSATMKGLEIAEELWRILQYDDAVCSHSNMDQLPLVVNYELSSGSATPKPQLYLPLHGRNDEAMANALTKFWDYLGWKGLAAQYKKDLYANNPCRNLAETTTVQRWVAFSYTESGGAYLTVYFHAVGGMKGNL.

A disordered region spans residues 1–28; it reads MSPLSMQTDSVQGTAENKSLETNGTSND. Residues 102-103 and glutamate 111 contribute to the L-tryptophan site; that span reads GF. Dimethylallyl diphosphate is bound by residues arginine 124, lysine 208, tyrosine 210, tyrosine 282, glutamine 355, tyrosine 357, tyrosine 422, and tyrosine 426.

It belongs to the tryptophan dimethylallyltransferase family.

The enzyme catalyses (R)-benzodiazepinedione + dimethylallyl diphosphate = (2R,3S,11R)-aszonalenin + diphosphate. The catalysed reaction is (S)-benzodiazepinedione + dimethylallyl diphosphate = (2R,3S,11S)-aszonalenin + diphosphate. It functions in the pathway alkaloid biosynthesis. In terms of biological role, indole diterpene prenyltransferase; part of the gene cluster that mediates the biosynthesis of the prenylated pyrroloindoline diketopiperazine acetylaszonalenin. The first step in the pathway is the formation of (R)-benzodiazepinedione by condensation of tryptophan and anthranilic acid catalyzed by the non-ribosomal peptide synthetase anaPS. The prenyltransferase anaPT then converts (R)-benzodiazepinedione to aszonalenin in the presence of dimethylallyl diphosphate (DMAPP) via C3-prenylation. The last step in the biosynthesis of acetylaszonalenin via acetylation of aszonalenin at position N1 catalyzed by anaAT. This is Indole diterpene prenyltransferase anaPT from Neosartorya fischeri (strain ATCC 1020 / DSM 3700 / CBS 544.65 / FGSC A1164 / JCM 1740 / NRRL 181 / WB 181) (Aspergillus fischerianus).